The sequence spans 358 residues: Protein-glutamate methylesterase/protein-glutamine glutaminase 1 (358 aa).

Positions 7-124 (SVLLVDDSAV…KNFLIDSAAE (118 aa)) constitute a Response regulatory domain. Position 58 is a 4-aspartylphosphate (Asp-58). Residues 170–358 (AQTTERIVAI…QEIHQAILHR (189 aa)) enclose the CheB-type methylesterase domain. Active-site residues include Ser-182, His-208, and Asp-304.

Belongs to the CheB family. In terms of processing, phosphorylated by CheA. Phosphorylation of the N-terminal regulatory domain activates the methylesterase activity.

The protein localises to the cytoplasm. The enzyme catalyses [protein]-L-glutamate 5-O-methyl ester + H2O = L-glutamyl-[protein] + methanol + H(+). It catalyses the reaction L-glutaminyl-[protein] + H2O = L-glutamyl-[protein] + NH4(+). In terms of biological role, involved in chemotaxis. Part of a chemotaxis signal transduction system that modulates chemotaxis in response to various stimuli. Catalyzes the demethylation of specific methylglutamate residues introduced into the chemoreceptors (methyl-accepting chemotaxis proteins or MCP) by CheR. Also mediates the irreversible deamidation of specific glutamine residues to glutamic acid. In Pseudomonas savastanoi pv. phaseolicola (strain 1448A / Race 6) (Pseudomonas syringae pv. phaseolicola (strain 1448A / Race 6)), this protein is Protein-glutamate methylesterase/protein-glutamine glutaminase 1.